Here is a 247-residue protein sequence, read N- to C-terminus: Segregation and condensation protein A (247 aa).

The protein belongs to the ScpA family. As to quaternary structure, component of a cohesin-like complex composed of ScpA, ScpB and the Smc homodimer, in which ScpA and ScpB bind to the head domain of Smc. The presence of the three proteins is required for the association of the complex with DNA.

It is found in the cytoplasm. Functionally, participates in chromosomal partition during cell division. May act via the formation of a condensin-like complex containing Smc and ScpB that pull DNA away from mid-cell into both cell halves. The sequence is that of Segregation and condensation protein A from Bacillus cereus (strain ATCC 10987 / NRS 248).